Consider the following 776-residue polypeptide: Protein translocase subunit SecA 2 (776 aa).

ATP is bound by residues glutamine 80, 98 to 102 (GEGKT), and aspartate 486.

This sequence belongs to the SecA family. In terms of assembly, monomer and homodimer. Part of the essential Sec protein translocation apparatus which comprises SecA, SecYEG and auxiliary proteins SecDF. Other proteins may also be involved.

It localises to the cell membrane. The protein localises to the cytoplasm. The catalysed reaction is ATP + H2O + cellular proteinSide 1 = ADP + phosphate + cellular proteinSide 2.. Part of the Sec protein translocase complex. Interacts with the SecYEG preprotein conducting channel. Has a central role in coupling the hydrolysis of ATP to the transfer of proteins into and across the cell membrane, serving as an ATP-driven molecular motor driving the stepwise translocation of polypeptide chains across the membrane. The sequence is that of Protein translocase subunit SecA 2 from Listeria monocytogenes serotype 1/2a (strain 10403S).